The primary structure comprises 493 residues: Lysine--tRNA ligase (493 aa).

2 residues coordinate Mg(2+): Glu-400 and Glu-407.

The protein belongs to the class-II aminoacyl-tRNA synthetase family. Homodimer. Mg(2+) serves as cofactor.

It is found in the cytoplasm. It carries out the reaction tRNA(Lys) + L-lysine + ATP = L-lysyl-tRNA(Lys) + AMP + diphosphate. The sequence is that of Lysine--tRNA ligase from Syntrophomonas wolfei subsp. wolfei (strain DSM 2245B / Goettingen).